We begin with the raw amino-acid sequence, 207 residues long: N-(5'-phosphoribosyl)anthranilate isomerase (207 aa).

It belongs to the TrpF family.

The catalysed reaction is N-(5-phospho-beta-D-ribosyl)anthranilate = 1-(2-carboxyphenylamino)-1-deoxy-D-ribulose 5-phosphate. The protein operates within amino-acid biosynthesis; L-tryptophan biosynthesis; L-tryptophan from chorismate: step 3/5. This is N-(5'-phosphoribosyl)anthranilate isomerase from Stutzerimonas stutzeri (strain A1501) (Pseudomonas stutzeri).